Consider the following 1091-residue polypeptide: MSMLLGVRGTRDQSSYIGGRDYVFWQKEMRDAERIPGPTPLPVVGNLFDIDLEHVLQSVIGLANKYGPLFQITINGEKQIFATSQALVDELCDESRFHKAVASGLENLRMLAHDGLFTAYHGERGWGIAHRILVPAFGPLRIQSMFDDMGDLAQQLCLKWARQGASNSINITDDFTRLTLDTIALCTMDFRLNSFYNNDTMHPFVESMLYVLREADVQSALPGIANSVRIMAHRRMLKNIEAMRTIARDIIHDRRKKENPADDLLNTLLNGRDPVTGEGMSDESIIDNVITFLVAGHETTSGLLSFTFYYLVQHPDILKKAQKEVDETVGQAQISVQHLAELPYIDAILKESLRMMPTAPGFTVTPKKAETLGGKWLLNAGQPINVLLPACLRDRSIFGPNADEFSPGRMLAENFSKLPPNSWKPFGNGERSCIGRAFAWQEAQLVVAMILQNFDLVPDDPSYTLRIKETLTIKPDGFRVRATLRHRQTATGLFQHTLSARNDTSLASSSAHFIKKSEDQAPAGGRPICFFYGSNSGTCKALAHRLASDLMPYGFTDQKLAVLDTAVDNLPRDQPVIILTTTYDGQPTDDAKKFVAWLESGKVPALQGISYAVFGCGHHDWTQTFYRIPTLIDELMHKAGATRLAPRGTANAAVSDLFSDLEAWEETSLLPALRETFLLSSSSDLEPLNLHQLQISLSKPRRIDLHKDLMEARVTTVRILTNPDTPEKRHIEFRFQGDTTLRPGDHVNVLPVNPPSTVLRVLAQFNLAPDYSITINSFNTLGLPQATPVSASELFSAYVELSQPATRNNLRILAATAQSDEDKQELIHLQDSYDSLVRDKRVSVLDLLEQFPSVSLPIAAFISMLPALRLRTYSLSLAPSFKPSHGSLTFSVVNEPARNGNRRYLGVGSNYLASLTPGSILYLSPRPAKEAFHLPVDQSRIPIIMICAGSGLAPFLSFIQDRMIWQQQDKPLARALLFFGCGGRFLDDLYHEELSEFEAAGVVDVRRAYSKVLDYDMARGCKYVQDRLVAEANAIRHLWAQDATIYVCGSADMAKGVEGVLEKLLGMLPRERYVTEIYQMQTRDNVSEWLI.

Cysteine 433 is a heme binding site. Residues 528–669 (ICFFYGSNSG…DLEAWEETSL (142 aa)) enclose the Flavodoxin-like domain. FMN is bound by residues 534–538 (SNSGT) and 613–645 (VFGC…TRLA). The FAD-binding FR-type domain occupies 707–935 (KDLMEARVTT…RPAKEAFHLP (229 aa)).

This sequence in the N-terminal section; belongs to the cytochrome P450 family. It depends on FAD as a cofactor. FMN serves as cofactor. The cofactor is heme.

The enzyme catalyses 2 oxidized [cytochrome P450] + NADPH = 2 reduced [cytochrome P450] + NADP(+) + H(+). It catalyses the reaction an organic molecule + reduced [NADPH--hemoprotein reductase] + O2 = an alcohol + oxidized [NADPH--hemoprotein reductase] + H2O + H(+). The catalysed reaction is dodecanoate + reduced [NADPH--hemoprotein reductase] + O2 = 5-hydroxydodecanoate + oxidized [NADPH--hemoprotein reductase] + H2O + H(+). It carries out the reaction tetradecanoate + reduced [NADPH--hemoprotein reductase] + O2 = 7-hydroxytetradecanoate + oxidized [NADPH--hemoprotein reductase] + H2O + H(+). The enzyme catalyses dodecan-1-ol + reduced [NADPH--hemoprotein reductase] + O2 = 1,5-dodecanediol + oxidized [NADPH--hemoprotein reductase] + H2O + H(+). It catalyses the reaction dodecan-1-ol + reduced [NADPH--hemoprotein reductase] + O2 = 1,4-dodecanediol + oxidized [NADPH--hemoprotein reductase] + H2O + H(+). The catalysed reaction is dodecan-1-ol + reduced [NADPH--hemoprotein reductase] + O2 = 1,6-dodecanediol + oxidized [NADPH--hemoprotein reductase] + H2O + H(+). Self-sufficient cytochrome P450 monooxygenase that catalyzes the regioselective in-chain hydroxylation of alkanes, fatty alcohols, and fatty acids at the omega-7 position. Performs hydroxylation of C10-C16 n-alkanes and C12 and C14 fatty alcohols; and thereby enables the one step biocatalytic synthesis of rare alcohols such as 5-dodecanol and 7-tetradecanol. Converts 1-dodecanol into 1,5-dodecanediol as major product with very little sub-terminally hydroxylated products with the 1,4-dodecanediol and 1,6-dodecanediol more abundant. Converts dodecanoic acid to 5-hydroxydodecanoic acid which can be further converted into delta-dodecalactone by lactonization of the 5-hydroxy acid at low pH. Also gives sub-terminal hydroxylation of dodecanoic acid with 9-hydroxydodecanoic acid being the second most abundant product. The protein is Self-sufficient cytochrome P450 monooxygenase CYP505E1 of Aspergillus niger (strain ATCC MYA-4892 / CBS 513.88 / FGSC A1513).